A 302-amino-acid chain; its full sequence is TATA-box-binding protein (302 aa).

Disordered regions lie at residues 1–22 (MDQN…SAMT) and 53–122 (EEQQ…SESS). 2 stretches are compositionally biased toward low complexity: residues 57-101 (RQQQ…TTPL) and 109-119 (MTPITPATPAS). 2 repeat units span residues 128–204 (LQNI…ARVV) and 218–295 (IQNM…YPIL).

It belongs to the TBP family. As to quaternary structure, belongs to the TFIID complex together with the TBP-associated factors (TAFs). Binds DNA as monomer.

It localises to the nucleus. Its function is as follows. General transcription factor that functions at the core of the DNA-binding multiprotein factor TFIID. Binding of TFIID to the TATA box is the initial transcriptional step of the pre-initiation complex (PIC), playing a role in the activation of eukaryotic genes transcribed by RNA polymerase II. The sequence is that of TATA-box-binding protein (TBP) from Craspedocephalus gramineus (Bamboo pit viper).